The chain runs to 316 residues: Olfactory receptor 2AG1 (316 aa).

Residues 1–25 (MELWNFTLGSGFILVGILNDSGSPE) are Extracellular-facing. Residues asparagine 5 and asparagine 19 are each glycosylated (N-linked (GlcNAc...) asparagine). Residues 26–49 (LLCATITILYLLALISNGLLLLAI) traverse the membrane as a helical segment. The Cytoplasmic portion of the chain corresponds to 50–57 (TMEARLHM). The helical transmembrane segment at 58-79 (PMYLLLGQLSLMDLLFTSVVTP) threads the bilayer. At 80–100 (KALADFLRRENTISFGGCALQ) the chain is on the extracellular side. Residues cysteine 97 and cysteine 189 are joined by a disulfide bond. A helical membrane pass occupies residues 101 to 120 (MFLALTMGGAEDLLLAFMAY). The Cytoplasmic portion of the chain corresponds to 121-139 (DRYVAICHPLTYMTLMSSR). A helical transmembrane segment spans residues 140-158 (ACWLMVATSWILASLSALI). Topologically, residues 159-195 (YTVYTMHYPFCRAQEIRHLLCEIPHLLKVACADTSRY) are extracellular. Residues 196 to 219 (ELMVYVMGVTFLIPSLAAILASYT) form a helical membrane-spanning segment. Topologically, residues 220-236 (QILLTVLHMPSNEGRKK) are cytoplasmic. The chain crosses the membrane as a helical span at residues 237 to 259 (ALVTCSSHLTVVGMFYGAATFMY). Topologically, residues 260 to 272 (VLPSSFHSTRQDN) are extracellular. Residues 273–292 (IISVFYTIVTPALNPLIYSL) form a helical membrane-spanning segment. At 293–316 (RNKEVMRALRRVLGKYMLPAHSTL) the chain is on the cytoplasmic side.

The protein belongs to the G-protein coupled receptor 1 family.

It is found in the cell membrane. In terms of biological role, odorant receptor. In Homo sapiens (Human), this protein is Olfactory receptor 2AG1 (OR2AG1).